The sequence spans 957 residues: MARYNPFSFTPGPVVFFTTVIYVGLFAALLVTHLTVPDYPSDPPAGINLTEAWADLEHITRRFHPYNSHANDHVREYLLSRIQGIVATKHLDGSQVEIIDDLTSNATFSSGATSVYFEGTNIIVAIRGSEDDEPFNSTDRRPNNGGVLVNAHYDSVSSGYGATDDGVGVVTVLQLLSYFTESHNWPKRTIILLLNNGEEDFLNGAKAFMRNPISRVPHTFVNLEGAGAGGRATLFRSTDTEVTRFYSKSKYPFGTVVSGDGFKKGLIRSETDYRVFHSDLGLRGLDIAFMEPRARYHTVEDSTRETSMNSLWHMLSAALASTSGLAAVTGEEFSGSESLDNGRVNAGRGSDGVWFDLFGRVFVVFQLHTLFALCVTLLVVAPITLIGLTFGLSKADKNYLLARKAFVYSSDDDNPVQLYGWRGFFRFPIIFISATAVVVALAYLLVRFNAFIIYSSPFAVWSMMLSAWFFVAWFFSRGADAMRPSALQRMYALIWLFIGSFVLLTIVTVFVNNYQVVAGYPALFYFAVVFVAIMLSYLELFFAPTKSAYARHFEHDANSRRNSDSASRPLTGSTTAARSDDRPVADDDATEITSLLRGDRRGFTRYGSRRDSASEGGEDQAQGSQRLDLGNVYPGEQEWSGKLPSWIWIIQLLLLAPLVIVLVGQVALLLTSALYQTPSDGNSPLFIYLAIAALSVLLLAPTGPFIHRFTYHVPTFLFLVCLGTVIYNLVAFPFSRDHRLKVYFVQRVNCETGANTVSLTGLDSYVQRIVGELPSAQDQPLNCTTPDVATRKELKTCEWEGLPAKVVPNAAGAAPFGNETNTGRWLEYSIHKGNRSNKATMLVVGLNTRACRIVFDSPISGLAVTGAVSDPRFKPVGAAGSREVRLWHREFGQPWNVGLTWDAEEHAKLSGRVVCLWSDANTGSIPAFDEVQHYLPVWAIPSKISDGLVEGFKRFEI.

Residues 1–10 (MARYNPFSFT) lie on the Cytoplasmic side of the membrane. The chain crosses the membrane as a helical span at residues 11–31 (PGPVVFFTTVIYVGLFAALLV). Residues 32–369 (THLTVPDYPS…RVFVVFQLHT (338 aa)) are Vacuolar-facing. 3 N-linked (GlcNAc...) asparagine glycosylation sites follow: asparagine 48, asparagine 105, and asparagine 136. Zn(2+) contacts are provided by histidine 152 and aspartate 164. Residue glutamate 198 is the Proton acceptor of the active site. Residues glutamate 199, glutamate 224, and histidine 297 each coordinate Zn(2+). The helical transmembrane segment at 370 to 390 (LFALCVTLLVVAPITLIGLTF) threads the bilayer. Over 391 to 423 (GLSKADKNYLLARKAFVYSSDDDNPVQLYGWRG) the chain is Cytoplasmic. A helical transmembrane segment spans residues 424-444 (FFRFPIIFISATAVVVALAYL). Topologically, residues 445 to 450 (LVRFNA) are vacuolar. Residues 451–471 (FIIYSSPFAVWSMMLSAWFFV) form a helical membrane-spanning segment. Residues 472–490 (AWFFSRGADAMRPSALQRM) lie on the Cytoplasmic side of the membrane. Residues 491–511 (YALIWLFIGSFVLLTIVTVFV) form a helical membrane-spanning segment. Topologically, residues 512-521 (NNYQVVAGYP) are vacuolar. Residues 522 to 542 (ALFYFAVVFVAIMLSYLELFF) form a helical membrane-spanning segment. Residues 543–642 (APTKSAYARH…YPGEQEWSGK (100 aa)) are Cytoplasmic-facing. Disordered stretches follow at residues 559–586 (SRRNSDSASRPLTGSTTAARSDDRPVAD) and 603–627 (FTRYGSRRDSASEGGEDQAQGSQRL). Residues 603-613 (FTRYGSRRDSA) are compositionally biased toward basic and acidic residues. Residues 643–663 (LPSWIWIIQLLLLAPLVIVLV) form a helical membrane-spanning segment. At 664–685 (GQVALLLTSALYQTPSDGNSPL) the chain is on the vacuolar side. The helical transmembrane segment at 686–706 (FIYLAIAALSVLLLAPTGPFI) threads the bilayer. Topologically, residues 707–713 (HRFTYHV) are cytoplasmic. Residues 714–734 (PTFLFLVCLGTVIYNLVAFPF) form a helical membrane-spanning segment. Residues 735–957 (SRDHRLKVYF…LVEGFKRFEI (223 aa)) are Vacuolar-facing. Asparagine 782, asparagine 818, and asparagine 834 each carry an N-linked (GlcNAc...) asparagine glycan.

It belongs to the peptidase M28 family. Requires Zn(2+) as cofactor.

The protein resides in the vacuole membrane. May be involved in vacuolar sorting and osmoregulation. This Pyrenophora teres f. teres (strain 0-1) (Barley net blotch fungus) protein is Vacuolar membrane protease.